A 900-amino-acid chain; its full sequence is Bifunctional uridylyltransferase/uridylyl-removing enzyme (900 aa).

Residues Met-1–Pro-342 form a uridylyltransferase region. Residues Leu-343–Ser-705 form a uridylyl-removing region. The 123-residue stretch at Val-461–Leu-583 folds into the HD domain. ACT domains are found at residues Gln-706–Arg-789 and Val-816–Arg-891.

Belongs to the GlnD family. Mg(2+) is required as a cofactor.

It carries out the reaction [protein-PII]-L-tyrosine + UTP = [protein-PII]-uridylyl-L-tyrosine + diphosphate. The enzyme catalyses [protein-PII]-uridylyl-L-tyrosine + H2O = [protein-PII]-L-tyrosine + UMP + H(+). Its activity is regulated as follows. Uridylyltransferase (UTase) activity is inhibited by glutamine, while glutamine activates uridylyl-removing (UR) activity. Its function is as follows. Modifies, by uridylylation and deuridylylation, the PII regulatory proteins (GlnB and homologs), in response to the nitrogen status of the cell that GlnD senses through the glutamine level. Under low glutamine levels, catalyzes the conversion of the PII proteins and UTP to PII-UMP and PPi, while under higher glutamine levels, GlnD hydrolyzes PII-UMP to PII and UMP (deuridylylation). Thus, controls uridylylation state and activity of the PII proteins, and plays an important role in the regulation of nitrogen assimilation and metabolism. This is Bifunctional uridylyltransferase/uridylyl-removing enzyme from Pseudomonas aeruginosa (strain ATCC 15692 / DSM 22644 / CIP 104116 / JCM 14847 / LMG 12228 / 1C / PRS 101 / PAO1).